The chain runs to 413 residues: MESDIKNETSFQELDMILTQYLETLSERKKYHIGYPINMCYEHHATLAPLLQFHLNNCGDPFTQHPTDFHSKDFEVAVLDWFAQLWEIEKDEYWGYITSGGTEGNLHGFWLGRRELLPNGYLYASKDSHYSIFKAARMYRMELQTINTLVNGEIDYEDLQSKLLVNKNKPAIININIGTTFKGAIDDLDFVIQTLENCGYSNDNYYIHCDRALCGLILPFIKHAKKITFKKPIGSISISGHKFLGCPMSCGVQITRRSYVSTLSKIEYINSADATISGSRNGFTPIFLWYCLSKKGHARLQQDSITCIENARYLKDRLLEAGISVMLNDFSITVVFERPCDHKFIRRWNLCCLRGMAHVVIMPGITRETIDSFFKDLMQERNYKWYQDVKALPPCLADDLALNCMCSNKKMHN.

Histidine 129 provides a ligand contact to substrate. An N6-(pyridoxal phosphate)lysine modification is found at lysine 242.

It belongs to the group II decarboxylase family. Pyridoxal 5'-phosphate serves as cofactor. In terms of tissue distribution, ripe fruits; not detected in leaves and unripe fruit.

It catalyses the reaction L-histidine + H(+) = histamine + CO2. This is Histidine decarboxylase (HDC) from Solanum lycopersicum (Tomato).